A 160-amino-acid polypeptide reads, in one-letter code: MDKLTHINQQGDAHMVDVSDKKITTREATAMAIVSMKQSTLELILSSSNTKGDVLVIARIAGIYAAKKCWDLIPLCHPLMLSKIMVELTPNEKNATIEIKTLVKLDGKTGVEMEALTAASVTALTIYDMCKSVDRFIKIGEIQLLEKKGGKSGHWKLENV.

Substrate is bound by residues 75–77 (LCH) and 113–114 (ME). Asp-128 is a catalytic residue.

Belongs to the MoaC family. As to quaternary structure, homohexamer; trimer of dimers.

It carries out the reaction (8S)-3',8-cyclo-7,8-dihydroguanosine 5'-triphosphate = cyclic pyranopterin phosphate + diphosphate. It participates in cofactor biosynthesis; molybdopterin biosynthesis. In terms of biological role, catalyzes the conversion of (8S)-3',8-cyclo-7,8-dihydroguanosine 5'-triphosphate to cyclic pyranopterin monophosphate (cPMP). The protein is Cyclic pyranopterin monophosphate synthase of Ruthia magnifica subsp. Calyptogena magnifica.